A 166-amino-acid chain; its full sequence is Large ribosomal subunit protein uL10 (166 aa).

It belongs to the universal ribosomal protein uL10 family. In terms of assembly, part of the ribosomal stalk of the 50S ribosomal subunit. The N-terminus interacts with L11 and the large rRNA to form the base of the stalk. The C-terminus forms an elongated spine to which L12 dimers bind in a sequential fashion forming a multimeric L10(L12)X complex.

In terms of biological role, forms part of the ribosomal stalk, playing a central role in the interaction of the ribosome with GTP-bound translation factors. The protein is Large ribosomal subunit protein uL10 of Streptococcus sanguinis (strain SK36).